Consider the following 220-residue polypeptide: Type-4 uracil-DNA glycosylase (220 aa).

Cysteine 14 and cysteine 17 together coordinate [4Fe-4S] cluster. Uracil contacts are provided by residues 41 to 43 (GEA), phenylalanine 55, and asparagine 82. [4Fe-4S] cluster contacts are provided by cysteine 86 and cysteine 102. Residue histidine 164 coordinates uracil.

The protein belongs to the uracil-DNA glycosylase (UDG) superfamily. Type 4 (UDGa) family.

The catalysed reaction is Hydrolyzes single-stranded DNA or mismatched double-stranded DNA and polynucleotides, releasing free uracil.. Its function is as follows. Removes uracil bases that are present in DNA as a result of either deamination of cytosine or misincorporation of dUMP instead of dTMP. The polypeptide is Type-4 uracil-DNA glycosylase (Sulfurisphaera tokodaii (strain DSM 16993 / JCM 10545 / NBRC 100140 / 7) (Sulfolobus tokodaii)).